We begin with the raw amino-acid sequence, 428 residues long: Immunoglobulin superfamily containing leucine-rich repeat protein (428 aa).

An N-terminal signal peptide occupies residues Met-1–Ala-18. The region spanning Cys-19–Ala-50 is the LRRNT domain. N-linked (GlcNAc...) asparagine glycosylation is present at Asn-51. 5 LRR repeats span residues Asn-51–Glu-72, Arg-75–Ser-96, Gln-99–Ser-122, Ala-123–Ser-144, and Ala-147–Pro-168. The LRRCT domain maps to Asn-180–Ala-231. The Ig-like domain occupies Pro-232–Ala-343. Cys-257 and Cys-327 are disulfide-bonded. Asn-309 carries an N-linked (GlcNAc...) asparagine glycan.

Its subcellular location is the secreted. This chain is Immunoglobulin superfamily containing leucine-rich repeat protein (ISLR), found in Bos taurus (Bovine).